Here is a 294-residue protein sequence, read N- to C-terminus: MKTHHANLALALMLGLSSSATAVAADAPQAVATKAAAPNVKPVAADAHGVIPDGAPGMCARSPACRATAIPADAFVRTADLGRLTDADRDALAALGVKLDIDLRTADEEAQSPDLLARDDRFDYQRISLMGTEKMDLQKMMTSFPDSLGEAYVQWLGHSQPQFKQVFQRIAAQQDGAVLFHCTAGKDRTGIIAGLLLDLAGVPKAEIVHNYAISAHYLEGQPKDSDERADHGAGQAEPGDRPQDGGHGRYRAGQHGAVLAALHSQYGGAEGYLKSIGVSEQEIQQLKVRLGQAG.

The N-terminal stretch at 1 to 24 is a signal peptide; it reads MKTHHANLALALMLGLSSSATAVA. The Phosphocysteine intermediate role is filled by cysteine 182. Basic and acidic residues-rich tracts occupy residues 221-231 and 238-247; these read QPKDSDERADH and PGDRPQDGGH. The segment at 221–252 is disordered; that stretch reads QPKDSDERADHGAGQAEPGDRPQDGGHGRYRA.

It belongs to the protein-tyrosine phosphatase family. In terms of assembly, monomer.

It catalyses the reaction O-phospho-L-tyrosyl-[protein] + H2O = L-tyrosyl-[protein] + phosphate. This chain is Tyrosine-protein phosphatase (iphP), found in Nostoc commune.